Consider the following 518-residue polypeptide: Cytochrome P450 82E3 (518 aa).

Residues 2 to 22 (VFPVEAIVGLVTFTFLFYFLW) form a helical membrane-spanning segment. A Glycyl lysine isopeptide (Lys-Gly) (interchain with G-Cter in ubiquitin) cross-link involves residue K254. Heme is bound at residue C458.

It belongs to the cytochrome P450 family. CYP82E2 subfamily. Heme serves as cofactor. In terms of tissue distribution, expressed at low levels in green leaves.

It is found in the membrane. Its pathway is alkaloid biosynthesis; nicotine biosynthesis. Its function is as follows. No nicotine N-demethylase activity. The sequence is that of Cytochrome P450 82E3 from Nicotiana tabacum (Common tobacco).